The primary structure comprises 538 residues: Phosphoenolpyruvate carboxykinase (ATP) (538 aa).

Arg-64, Tyr-205, and Lys-211 together coordinate substrate. Residues Lys-211, His-230, and 246 to 254 (GLSGTGKTT) each bind ATP. Mn(2+) contacts are provided by Lys-211 and His-230. Residue Asp-267 participates in Mn(2+) binding. ATP-binding positions include Glu-295, Arg-331, 447 to 448 (RI), and Thr-453. Arg-331 provides a ligand contact to substrate.

The protein belongs to the phosphoenolpyruvate carboxykinase (ATP) family. As to quaternary structure, monomer. Requires Mn(2+) as cofactor.

Its subcellular location is the cytoplasm. The enzyme catalyses oxaloacetate + ATP = phosphoenolpyruvate + ADP + CO2. It participates in carbohydrate biosynthesis; gluconeogenesis. In terms of biological role, involved in the gluconeogenesis. Catalyzes the conversion of oxaloacetate (OAA) to phosphoenolpyruvate (PEP) through direct phosphoryl transfer between the nucleoside triphosphate and OAA. The chain is Phosphoenolpyruvate carboxykinase (ATP) from Haemophilus influenzae (strain PittGG).